The sequence spans 566 residues: Alpha-keto-acid decarboxylase (566 aa).

Glu61 is a binding site for thiamine diphosphate. The segment at 396–478 (TSFYGMADHR…VVVNNDGYTV (83 aa)) is thiamine pyrophosphate binding. Asp446, Asn473, and Gly475 together coordinate Mg(2+).

It belongs to the TPP enzyme family. A metal cation serves as cofactor. The cofactor is thiamine diphosphate.

Its function is as follows. Decarboxylates branched-chain and aromatic alpha-keto acids to aldehydes. The sequence is that of Alpha-keto-acid decarboxylase (kdc) from Mycobacterium ulcerans (strain Agy99).